The primary structure comprises 366 residues: Cobalt-precorrin-5B C(1)-methyltransferase (366 aa).

Belongs to the CbiD family.

The enzyme catalyses Co-precorrin-5B + S-adenosyl-L-methionine = Co-precorrin-6A + S-adenosyl-L-homocysteine. It participates in cofactor biosynthesis; adenosylcobalamin biosynthesis; cob(II)yrinate a,c-diamide from sirohydrochlorin (anaerobic route): step 6/10. Its function is as follows. Catalyzes the methylation of C-1 in cobalt-precorrin-5B to form cobalt-precorrin-6A. This is Cobalt-precorrin-5B C(1)-methyltransferase from Pseudomonas aeruginosa (strain UCBPP-PA14).